Consider the following 1344-residue polypeptide: Myb-binding protein 1A (1344 aa).

Positions 1–24 (MAEMKSPTKAEPATPAEAAQSDRH) are disordered. Alanine 2 carries the N-acetylalanine modification. Residues 2-580 (AEMKSPTKAE…WDQMMSTLKE (579 aa)) form an interaction with MYB region. Low complexity predominate over residues 7–19 (PTKAEPATPAEAA). Residues lysine 69 and lysine 156 each carry the N6-acetyllysine modification. Short sequence motifs (nuclear export signal) lie at residues 238–256 (SEDN…ANSV) and 261–279 (KLPN…ESRF). 2 disordered regions span residues 710–751 (DEKQ…DKDV) and 1146–1344 (QRPK…VQTP). Over residues 732-747 (SDMDSEDGEESEEEDR) the composition is skewed to acidic residues. The segment covering 1148–1159 (PKSEKKNAKDIP) has biased composition (basic and acidic residues). A Glycyl lysine isopeptide (Lys-Gly) (interchain with G-Cter in SUMO2) cross-link involves residue lysine 1149. Residues 1152 to 1344 (KKNAKDIPSD…RVASRRVQTP (193 aa)) form a required for nuclear and nucleolar localization region. Serine 1160 and serine 1164 each carry phosphoserine. A compositionally biased stretch (basic residues) spans 1168–1185 (TKRKKKGFLPETKKRKKL). Residue serine 1187 is modified to Phosphoserine. The span at 1188–1202 (EGTTPEKNAASQQDA) shows a compositional bias: polar residues. Residue threonine 1191 is modified to Phosphothreonine. Serine 1219 and serine 1244 each carry phosphoserine. Positions 1249 to 1258 (NPTLSPSTPA) are enriched in polar residues. Threonine 1251 is subject to Phosphothreonine. A Phosphoserine modification is found at serine 1253. Phosphothreonine occurs at positions 1256 and 1277. 3 positions are modified to phosphoserine: serine 1280, serine 1303, and serine 1318. The segment covering 1317 to 1329 (LSLVSRSPSLLQS) has biased composition (low complexity). Arginine 1322 is modified (citrulline). Serine 1323, serine 1325, and serine 1329 each carry phosphoserine.

Belongs to the MYBBP1A family. Component of the B-WICH complex, at least composed of SMARCA5/SNF2H, BAZ1B/WSTF, SF3B1, DEK, MYO1C, ERCC6, MYBBP1A and DDX21. Binds to and represses JUN and MYB via the leucine zipper regions present in these proteins. Also binds to and represses PPARGC1A: this interaction is abrogated when PPARGC1A is phosphorylated by MAPK1/ERK. Binds to and stimulates transcription by AHR. Binds to KPNA2. Interacts with CLOCK and CRY1. Post-translationally, citrullinated by PADI4. As to expression, ubiquitously expressed.

Its subcellular location is the nucleus. It is found in the nucleolus. The protein localises to the cytoplasm. Its function is as follows. May activate or repress transcription via interactions with sequence specific DNA-binding proteins. Repression may be mediated at least in part by histone deacetylase activity (HDAC activity). Acts as a corepressor and in concert with CRY1, represses the transcription of the core circadian clock component PER2. Preferentially binds to dimethylated histone H3 'Lys-9' (H3K9me2) on the PER2 promoter. Has a role in rRNA biogenesis together with PWP1. The protein is Myb-binding protein 1A (Mybbp1a) of Mus musculus (Mouse).